The primary structure comprises 175 residues: Adenine phosphoribosyltransferase (175 aa).

It belongs to the purine/pyrimidine phosphoribosyltransferase family. In terms of assembly, homodimer.

The protein resides in the cytoplasm. The enzyme catalyses AMP + diphosphate = 5-phospho-alpha-D-ribose 1-diphosphate + adenine. Its pathway is purine metabolism; AMP biosynthesis via salvage pathway; AMP from adenine: step 1/1. In terms of biological role, catalyzes a salvage reaction resulting in the formation of AMP, that is energically less costly than de novo synthesis. The protein is Adenine phosphoribosyltransferase of Francisella tularensis subsp. holarctica (strain FTNF002-00 / FTA).